A 355-amino-acid chain; its full sequence is 3-dehydroquinate synthase (355 aa).

NAD(+) contacts are provided by residues 66–71 (SGETTK), 100–104 (GATGD), 124–125 (TT), Lys-136, Lys-145, and 163–166 (FLET). Zn(2+) is bound by residues Glu-178, His-242, and His-256.

The protein belongs to the sugar phosphate cyclases superfamily. Dehydroquinate synthase family. Requires Co(2+) as cofactor. The cofactor is Zn(2+). NAD(+) serves as cofactor.

The protein localises to the cytoplasm. The enzyme catalyses 7-phospho-2-dehydro-3-deoxy-D-arabino-heptonate = 3-dehydroquinate + phosphate. Its pathway is metabolic intermediate biosynthesis; chorismate biosynthesis; chorismate from D-erythrose 4-phosphate and phosphoenolpyruvate: step 2/7. Its function is as follows. Catalyzes the conversion of 3-deoxy-D-arabino-heptulosonate 7-phosphate (DAHP) to dehydroquinate (DHQ). This chain is 3-dehydroquinate synthase, found in Staphylococcus saprophyticus subsp. saprophyticus (strain ATCC 15305 / DSM 20229 / NCIMB 8711 / NCTC 7292 / S-41).